Consider the following 205-residue polypeptide: CASP-like protein 2A1 (205 aa).

Over M1–T35 the chain is Cytoplasmic. A helical transmembrane segment spans residues V36 to L56. The Extracellular portion of the chain corresponds to K57–Y77. Residues L78–M98 traverse the membrane as a helical segment. Residues P99 to R106 are Cytoplasmic-facing. A helical membrane pass occupies residues A107–V127. The Extracellular segment spans residues S128–K157. The chain crosses the membrane as a helical span at residues T158–I178. Residues S179–S205 lie on the Cytoplasmic side of the membrane.

It belongs to the Casparian strip membrane proteins (CASP) family. As to quaternary structure, homodimer and heterodimers.

It is found in the cell membrane. This Vitis vinifera (Grape) protein is CASP-like protein 2A1.